Reading from the N-terminus, the 388-residue chain is Alanine racemase (388 aa).

Lysine 39 serves as the catalytic Proton acceptor; specific for D-alanine. Lysine 39 is subject to N6-(pyridoxal phosphate)lysine. Lysine 129 is modified (N6-carboxylysine). Position 136 (arginine 136) interacts with substrate. Residue tyrosine 265 is the Proton acceptor; specific for L-alanine of the active site. Position 312 (methionine 312) interacts with substrate.

It belongs to the alanine racemase family. As to quaternary structure, homodimer. The cofactor is pyridoxal 5'-phosphate.

It catalyses the reaction L-alanine = D-alanine. Its pathway is amino-acid biosynthesis; D-alanine biosynthesis; D-alanine from L-alanine: step 1/1. Inhibited by acetate and propionate. Irreversibly inhibited by cycloserine. In terms of biological role, catalyzes the interconversion of L-alanine and D-alanine. Also weakly active on serine. This Geobacillus stearothermophilus (Bacillus stearothermophilus) protein is Alanine racemase (alr).